Here is a 316-residue protein sequence, read N- to C-terminus: Acetyl-coenzyme A carboxylase carboxyl transferase subunit alpha (316 aa).

Residues 39–293 (RLQDKSHALT…RQTLLAQLES (255 aa)) enclose the CoA carboxyltransferase C-terminal domain.

Belongs to the AccA family. In terms of assembly, acetyl-CoA carboxylase is a heterohexamer composed of biotin carboxyl carrier protein (AccB), biotin carboxylase (AccC) and two subunits each of ACCase subunit alpha (AccA) and ACCase subunit beta (AccD).

It localises to the cytoplasm. The catalysed reaction is N(6)-carboxybiotinyl-L-lysyl-[protein] + acetyl-CoA = N(6)-biotinyl-L-lysyl-[protein] + malonyl-CoA. Its pathway is lipid metabolism; malonyl-CoA biosynthesis; malonyl-CoA from acetyl-CoA: step 1/1. In terms of biological role, component of the acetyl coenzyme A carboxylase (ACC) complex. First, biotin carboxylase catalyzes the carboxylation of biotin on its carrier protein (BCCP) and then the CO(2) group is transferred by the carboxyltransferase to acetyl-CoA to form malonyl-CoA. The sequence is that of Acetyl-coenzyme A carboxylase carboxyl transferase subunit alpha from Azotobacter vinelandii (strain DJ / ATCC BAA-1303).